Here is a 251-residue protein sequence, read N- to C-terminus: 3-deoxy-manno-octulosonate cytidylyltransferase (251 aa).

It belongs to the KdsB family.

It localises to the cytoplasm. It catalyses the reaction 3-deoxy-alpha-D-manno-oct-2-ulosonate + CTP = CMP-3-deoxy-beta-D-manno-octulosonate + diphosphate. It participates in nucleotide-sugar biosynthesis; CMP-3-deoxy-D-manno-octulosonate biosynthesis; CMP-3-deoxy-D-manno-octulosonate from 3-deoxy-D-manno-octulosonate and CTP: step 1/1. Its pathway is bacterial outer membrane biogenesis; lipopolysaccharide biosynthesis. In terms of biological role, activates KDO (a required 8-carbon sugar) for incorporation into bacterial lipopolysaccharide in Gram-negative bacteria. This chain is 3-deoxy-manno-octulosonate cytidylyltransferase, found in Chromobacterium violaceum (strain ATCC 12472 / DSM 30191 / JCM 1249 / CCUG 213 / NBRC 12614 / NCIMB 9131 / NCTC 9757 / MK).